A 213-amino-acid polypeptide reads, in one-letter code: Thymidylate kinase (213 aa).

Position 10-17 (10-17 (GLEGAGKT)) interacts with ATP.

The protein belongs to the thymidylate kinase family.

It carries out the reaction dTMP + ATP = dTDP + ADP. In terms of biological role, phosphorylation of dTMP to form dTDP in both de novo and salvage pathways of dTTP synthesis. The polypeptide is Thymidylate kinase (Escherichia coli O81 (strain ED1a)).